The chain runs to 59 residues: Large ribosomal subunit protein uL30 (59 aa).

This sequence belongs to the universal ribosomal protein uL30 family. Part of the 50S ribosomal subunit.

The chain is Large ribosomal subunit protein uL30 from Yersinia pseudotuberculosis serotype I (strain IP32953).